The chain runs to 428 residues: Ribosomal RNA small subunit methyltransferase B (428 aa).

S-adenosyl-L-methionine-binding positions include 253 to 259, Asp-276, Asp-302, and Asp-321; that span reads CAAPGGK. Cys-374 acts as the Nucleophile in catalysis.

This sequence belongs to the class I-like SAM-binding methyltransferase superfamily. RsmB/NOP family.

The protein resides in the cytoplasm. The catalysed reaction is cytidine(967) in 16S rRNA + S-adenosyl-L-methionine = 5-methylcytidine(967) in 16S rRNA + S-adenosyl-L-homocysteine + H(+). Functionally, specifically methylates the cytosine at position 967 (m5C967) of 16S rRNA. This is Ribosomal RNA small subunit methyltransferase B from Enterobacter sp. (strain 638).